Here is a 148-residue protein sequence, read N- to C-terminus: MKVVLLQDVKGLGKKDSIVEVNDGYARNYLIPRKLAAPLTEGLEKHIKEKKEAEQKKKEKELMLAKDLADKLEKSQVIIKAKAGENGKLFGSITNKEIADEIKRQLGIDMDKKKIELEDPIKQIGSYEVSIRLYQGIVAKLKVHVTSS.

This sequence belongs to the bacterial ribosomal protein bL9 family.

Functionally, binds to the 23S rRNA. This is Large ribosomal subunit protein bL9 from Caldicellulosiruptor saccharolyticus (strain ATCC 43494 / DSM 8903 / Tp8T 6331).